The chain runs to 367 residues: Queuine tRNA-ribosyltransferase (367 aa).

Asp-89 acts as the Proton acceptor in catalysis. Substrate-binding positions include 89–93, Asp-143, Gln-185, and Gly-212; that span reads DSGGF. An RNA binding region spans residues 243–249; it reads GVGTPSD. Asp-262 functions as the Nucleophile in the catalytic mechanism. The tract at residues 267–271 is RNA binding; important for wobble base 34 recognition; it reads TRNAR. Zn(2+)-binding residues include Cys-300, Cys-302, Cys-305, and His-331.

It belongs to the queuine tRNA-ribosyltransferase family. In terms of assembly, homodimer. Within each dimer, one monomer is responsible for RNA recognition and catalysis, while the other monomer binds to the replacement base PreQ1. It depends on Zn(2+) as a cofactor.

The catalysed reaction is 7-aminomethyl-7-carbaguanine + guanosine(34) in tRNA = 7-aminomethyl-7-carbaguanosine(34) in tRNA + guanine. It functions in the pathway tRNA modification; tRNA-queuosine biosynthesis. In terms of biological role, catalyzes the base-exchange of a guanine (G) residue with the queuine precursor 7-aminomethyl-7-deazaguanine (PreQ1) at position 34 (anticodon wobble position) in tRNAs with GU(N) anticodons (tRNA-Asp, -Asn, -His and -Tyr). Catalysis occurs through a double-displacement mechanism. The nucleophile active site attacks the C1' of nucleotide 34 to detach the guanine base from the RNA, forming a covalent enzyme-RNA intermediate. The proton acceptor active site deprotonates the incoming PreQ1, allowing a nucleophilic attack on the C1' of the ribose to form the product. After dissociation, two additional enzymatic reactions on the tRNA convert PreQ1 to queuine (Q), resulting in the hypermodified nucleoside queuosine (7-(((4,5-cis-dihydroxy-2-cyclopenten-1-yl)amino)methyl)-7-deazaguanosine). The polypeptide is Queuine tRNA-ribosyltransferase (Thiobacillus denitrificans (strain ATCC 25259 / T1)).